A 201-amino-acid polypeptide reads, in one-letter code: MSKVLVLKSSILAGYSQSNQLSDYFVEQWREKHSADEITVRDLAANPIPVLDGELVGALRPSDAPLTPRQQEALALSDELIAELKAHDVIVIAAPMYNFNISTQLKNYFDLVARAGVTFRYTEKGPEGLVTGKKAIVITSRGGIHKDGPTDLVTPYLSTFLGFIGITDVKFVFAEGIAYGPEMAAKAQSDAKAAIDSIVAE.

FMN-binding positions include Ser10, Ser16–Ser18, Met96–Phe99, and Ser140–Gly143.

It belongs to the azoreductase type 1 family. In terms of assembly, homodimer. Requires FMN as cofactor.

It catalyses the reaction 2 a quinone + NADH + H(+) = 2 a 1,4-benzosemiquinone + NAD(+). It carries out the reaction N,N-dimethyl-1,4-phenylenediamine + anthranilate + 2 NAD(+) = 2-(4-dimethylaminophenyl)diazenylbenzoate + 2 NADH + 2 H(+). Functionally, quinone reductase that provides resistance to thiol-specific stress caused by electrophilic quinones. Also exhibits azoreductase activity. Catalyzes the reductive cleavage of the azo bond in aromatic azo compounds to the corresponding amines. This Escherichia coli O6:K15:H31 (strain 536 / UPEC) protein is FMN-dependent NADH:quinone oxidoreductase.